We begin with the raw amino-acid sequence, 545 residues long: Chaperonin GroEL (545 aa).

ATP-binding positions include 30-33 (TLGP), lysine 51, 87-91 (DGTTT), glycine 415, 479-481 (NAA), and aspartate 495.

The protein belongs to the chaperonin (HSP60) family. As to quaternary structure, forms a cylinder of 14 subunits composed of two heptameric rings stacked back-to-back. Interacts with the co-chaperonin GroES.

Its subcellular location is the cytoplasm. It catalyses the reaction ATP + H2O + a folded polypeptide = ADP + phosphate + an unfolded polypeptide.. Together with its co-chaperonin GroES, plays an essential role in assisting protein folding. The GroEL-GroES system forms a nano-cage that allows encapsulation of the non-native substrate proteins and provides a physical environment optimized to promote and accelerate protein folding. This is Chaperonin GroEL from Tolumonas auensis (strain DSM 9187 / NBRC 110442 / TA 4).